Reading from the N-terminus, the 425-residue chain is E3 ubiquitin-protein ligase CBLL2 (425 aa).

The RING-type zinc-finger motif lies at 57–97 (CDKCDLPIKIYGRIIPCKHAFCYHCANLYDKVGYKVCPRCR). Residues 96–154 (CRYPVLRIEAHKRGSVFMCSIVQQCKRTYLSQKSLQAHIKRRHKRARKQVTSASLEKVR) form an HYB domain region. The segment at 112–138 (FMCSIVQQCKRTYLSQKSLQAHIKRRH) adopts a C2H2-type zinc-finger fold. 2 disordered regions span residues 241 to 297 (DHIQ…HQMP) and 382 to 425 (TDAM…HRRY). Over residues 398–408 (PCPPTRSPPPS) the composition is skewed to pro residues. Over residues 412-425 (GRSHHSHQRRHRRY) the composition is skewed to basic residues.

In terms of assembly, homodimer. Exclusively expressed in testis and sperm, including spermatocytes, round and elongated spermatids, and Leydig cells.

It localises to the cytoplasm. It catalyses the reaction S-ubiquitinyl-[E2 ubiquitin-conjugating enzyme]-L-cysteine + [acceptor protein]-L-lysine = [E2 ubiquitin-conjugating enzyme]-L-cysteine + N(6)-ubiquitinyl-[acceptor protein]-L-lysine.. Its pathway is protein modification; protein ubiquitination. Functionally, E3 ubiquitin ligase catalyzing the covalent attachment of ubiquitin moieties onto substrate proteins. May operate on tyrosine-phosphorylated SRC substrates. The protein is E3 ubiquitin-protein ligase CBLL2 of Homo sapiens (Human).